Here is a 353-residue protein sequence, read N- to C-terminus: Probable peptide ABC transporter ATP-binding protein y4tS (353 aa).

The 251-residue stretch at 6–256 (LKVESLTKHY…PVHPYTEALI (251 aa)) folds into the ABC transporter domain. Residue 49–56 (GESGCGKS) participates in ATP binding.

Belongs to the ABC transporter superfamily.

It is found in the cell inner membrane. In terms of biological role, probably part of a binding-protein-dependent transport system y4tOPQRS for a peptide. Probably responsible for energy coupling to the transport system. The chain is Probable peptide ABC transporter ATP-binding protein y4tS from Sinorhizobium fredii (strain NBRC 101917 / NGR234).